The primary structure comprises 109 residues: Spermidine export protein MdtI (109 aa).

Helical transmembrane passes span 6–26 (WVHG…NVLL), 36–56 (CYGI…SQAV), 64–84 (AYAL…WVLF), and 88–108 (LNPK…MIKL).

It belongs to the drug/metabolite transporter (DMT) superfamily. Small multidrug resistance (SMR) (TC 2.A.7.1) family. MdtI subfamily. In terms of assembly, forms a complex with MdtJ.

The protein localises to the cell inner membrane. Its function is as follows. Catalyzes the excretion of spermidine. The protein is Spermidine export protein MdtI of Salmonella arizonae (strain ATCC BAA-731 / CDC346-86 / RSK2980).